The chain runs to 269 residues: Hydroxyethylthiazole kinase (269 aa).

Met-45 contacts substrate. ATP contacts are provided by Arg-121 and Thr-167. Gly-194 lines the substrate pocket.

The protein belongs to the Thz kinase family. Requires Mg(2+) as cofactor.

It carries out the reaction 5-(2-hydroxyethyl)-4-methylthiazole + ATP = 4-methyl-5-(2-phosphooxyethyl)-thiazole + ADP + H(+). It participates in cofactor biosynthesis; thiamine diphosphate biosynthesis; 4-methyl-5-(2-phosphoethyl)-thiazole from 5-(2-hydroxyethyl)-4-methylthiazole: step 1/1. In terms of biological role, catalyzes the phosphorylation of the hydroxyl group of 4-methyl-5-beta-hydroxyethylthiazole (THZ). The sequence is that of Hydroxyethylthiazole kinase from Brevibacillus brevis (strain 47 / JCM 6285 / NBRC 100599).